We begin with the raw amino-acid sequence, 87 residues long: Toxin RelG (87 aa).

This sequence belongs to the RelE toxin family. In terms of assembly, interacts with cognate antitoxin RelF, which neutralizes the toxin. Also interacts with non-cognate antitoxin RelB in vitro, in M.smegmatis this neutralizes the toxicity of this toxin.

Its function is as follows. Toxic component of a type II toxin-antitoxin (TA) system. Has RNase activity and preferentially cleaves at the 3'-end of purine ribonucleotides. Overexpression in M.tuberculosis or M.smegmatis inhibits colony formation in a bacteriostatic rather than bacteriocidal fashion. Its toxic effect is neutralized by coexpression with cognate antitoxin RelB2 (shown only for M.smegmatis). Overexpression also increases the number of gentamicin-tolerant and levofloxacin-tolerant persister cells. Functionally, in combination with cognate antitoxin RelF represses its own promoter. Has been seen to bind DNA in complex with antitoxin RelF but not alone. The protein is Toxin RelG (relG) of Mycobacterium tuberculosis (strain ATCC 25618 / H37Rv).